Reading from the N-terminus, the 453-residue chain is Bifunctional protein GlmU (453 aa).

Positions 1 to 225 are pyrophosphorylase; sequence MNIVILAAGT…EWETLGVNSK (225 aa). Residues 6–9, Lys-20, Gln-71, 76–77, 98–100, Gly-135, Glu-150, Asn-165, and Asn-223 contribute to the UDP-N-acetyl-alpha-D-glucosamine site; these read LAAG, GT, and YGD. Asp-100 serves as a coordination point for Mg(2+). Asn-223 contacts Mg(2+). The interval 226–246 is linker; sequence AQLAELERIHQRNVADALLVD. The tract at residues 247-453 is N-acetyltransferase; that stretch reads GVTLADPARV…GYVRPVKKKS (207 aa). UDP-N-acetyl-alpha-D-glucosamine-binding residues include Arg-329 and Lys-347. Residue His-359 is the Proton acceptor of the active site. The UDP-N-acetyl-alpha-D-glucosamine site is built by Tyr-362 and Asn-373. Acetyl-CoA is bound by residues Ala-376, 382 to 383, Ser-401, and Ala-419; that span reads NY.

The protein in the N-terminal section; belongs to the N-acetylglucosamine-1-phosphate uridyltransferase family. This sequence in the C-terminal section; belongs to the transferase hexapeptide repeat family. Homotrimer. Mg(2+) is required as a cofactor.

It is found in the cytoplasm. It catalyses the reaction alpha-D-glucosamine 1-phosphate + acetyl-CoA = N-acetyl-alpha-D-glucosamine 1-phosphate + CoA + H(+). The catalysed reaction is N-acetyl-alpha-D-glucosamine 1-phosphate + UTP + H(+) = UDP-N-acetyl-alpha-D-glucosamine + diphosphate. Its pathway is nucleotide-sugar biosynthesis; UDP-N-acetyl-alpha-D-glucosamine biosynthesis; N-acetyl-alpha-D-glucosamine 1-phosphate from alpha-D-glucosamine 6-phosphate (route II): step 2/2. It functions in the pathway nucleotide-sugar biosynthesis; UDP-N-acetyl-alpha-D-glucosamine biosynthesis; UDP-N-acetyl-alpha-D-glucosamine from N-acetyl-alpha-D-glucosamine 1-phosphate: step 1/1. It participates in bacterial outer membrane biogenesis; LPS lipid A biosynthesis. In terms of biological role, catalyzes the last two sequential reactions in the de novo biosynthetic pathway for UDP-N-acetylglucosamine (UDP-GlcNAc). The C-terminal domain catalyzes the transfer of acetyl group from acetyl coenzyme A to glucosamine-1-phosphate (GlcN-1-P) to produce N-acetylglucosamine-1-phosphate (GlcNAc-1-P), which is converted into UDP-GlcNAc by the transfer of uridine 5-monophosphate (from uridine 5-triphosphate), a reaction catalyzed by the N-terminal domain. In Burkholderia ambifaria (strain ATCC BAA-244 / DSM 16087 / CCUG 44356 / LMG 19182 / AMMD) (Burkholderia cepacia (strain AMMD)), this protein is Bifunctional protein GlmU.